Reading from the N-terminus, the 201-residue chain is MVYSVGLTGNIASGKSTVAEFFSELGINVIYADKIAKELTSKNTPCYQDIISHFGSSVVLNNGELDRKRIRDIIFSNSNERLWLESLLHPVIRKKIEEQLIVCTSPYCLIEIPLLFNKHHYPYLQKVLLVIAPLESQLDRIVKRDHCTKKQALAILATQPNLEQRLEAADDVLINESGLSELKAKVNKLHQKYLREAKIKQ.

A DPCK domain is found at 4 to 201 (SVGLTGNIAS…KYLREAKIKQ (198 aa)). 12 to 17 (ASGKST) serves as a coordination point for ATP.

Belongs to the CoaE family.

It is found in the cytoplasm. It carries out the reaction 3'-dephospho-CoA + ATP = ADP + CoA + H(+). The protein operates within cofactor biosynthesis; coenzyme A biosynthesis; CoA from (R)-pantothenate: step 5/5. Functionally, catalyzes the phosphorylation of the 3'-hydroxyl group of dephosphocoenzyme A to form coenzyme A. This is Dephospho-CoA kinase from Legionella pneumophila subsp. pneumophila (strain Philadelphia 1 / ATCC 33152 / DSM 7513).